The sequence spans 312 residues: Heterotepalin-4 (312 aa).

The signal sequence occupies residues 1–22; the sequence is MKSMLVVTISVWLILAPTSTWA. Intrachain disulfides connect Cys56–Cys280 and Cys107–Cys128. Glu197 is an active-site residue. The propeptide occupies 284–312; the sequence is YNQNAMFPQLIMSTYYNYMANLGDLFEEF.

The enzyme catalyses Endohydrolysis of the N-glycosidic bond at one specific adenosine on the 28S rRNA.. Its function is as follows. Inhibits protein synthesis in vitro. This Phytolacca heterotepala (Mexican pokeweed) protein is Heterotepalin-4.